We begin with the raw amino-acid sequence, 4699 residues long: PKS-NRPS hybrid synthetase cheA (4699 aa).

The segment covering 1–21 (MSDNDDEWNGFSDDNGEDDGP) has biased composition (acidic residues). 2 disordered regions span residues 1–38 (MSDN…WDVP) and 136–165 (DGWR…HTQH). Basic and acidic residues predominate over residues 136–148 (DGWRFHSHPDPQH). The N-terminal acylcarrier protein transacylase domain (SAT) stretch occupies residues 172–520 (SLDTIAELSN…VQQNVEEMAK (349 aa)). Residues 625 to 836 (PLPSVEDNVA…AGAPGARVTR (212 aa)) are disordered. Positions 674-688 (TQGSQGSQGRRTPGS) are enriched in low complexity. A compositionally biased stretch (basic residues) spans 724-737 (PKRRGRPPGSKNKK). The region spanning 737 to 1138 (KKDQAPAPAE…GANAHAILEA (402 aa)) is the Ketosynthase family 3 (KS3) domain. The span at 764–777 (ASAPRRGLRAAPAA) shows a compositional bias: low complexity. The span at 802–816 (ATASTPRAQSDQGTG) shows a compositional bias: polar residues. Active-site for beta-ketoacyl synthase activity residues include C873, H1012, and H1058. A malonyl-CoA:ACP transacylase (MAT) domain region spans residues 1250-1573 (VFTGQGAQWP…VGTLLRQRDA (324 aa)). The interval 1644–1777 (NELLGTRIMD…ANLIISLGEP (134 aa)) is N-terminal hotdog fold. Positions 1644 to 1947 (NELLGTRIMD…TKPLVPPTPS (304 aa)) constitute a PKS/mFAS DH domain. The tract at residues 1645 to 1941 (ELLGTRIMDN…QLQGLHTKPL (297 aa)) is dehydratase (DH) domain. The active-site Proton acceptor; for dehydratase activity is H1676. Positions 1794–1947 (MLDVPAERFY…TKPLVPPTPS (154 aa)) are C-terminal hotdog fold. Catalysis depends on D1854, which acts as the Proton donor; for dehydratase activity. The interval 2050–2241 (LNRFYIEALG…RNTGFSGADE (192 aa)) is methyltransferase (MT) domain. The segment at 2794-2967 (TYWLVGLTGG…PAAAVNIGAV (174 aa)) is ketoreductase (KR) domain. The Carrier 1 domain maps to 3076–3153 (DASEILEDAY…ALFELVKERA (78 aa)). Residue S3113 is modified to O-(pantetheine 4'-phosphoryl)serine. A disordered region spans residues 3164-3265 (EQPDQVKSPR…PVASSPDAGL (102 aa)). Polar residues-rich tracts occupy residues 3200 to 3209 (SLDQGSSWDS) and 3218 to 3233 (GHDS…SSPI). Residues 3268–3696 (SVPLSFSQAR…PISRISKPPL (429 aa)) are condensation (C) domain. An adenylation (A) domain region spans residues 3730–4113 (IQAHPDKLAL…GGLILEGRID (384 aa)). A Carrier 2 domain is found at 4236 to 4316 (EGLPAMQHLI…TMAALVASGS (81 aa)). The thiolation and peptide carrier (T) domain stretch occupies residues 4241 to 4313 (MQHLIKQLWE…TLETMAALVA (73 aa)). An O-(pantetheine 4'-phosphoryl)serine modification is found at S4276. Residues 4367 to 4598 (LTGSTGFLGR…ISVHTVAAAI (232 aa)) form a reductase (R) domain region.

It in the C-terminal section; belongs to the NRP synthetase family.

The protein operates within secondary metabolite biosynthesis. Its function is as follows. PKS-NRPS hybrid synthetase; part of the gene cluster that mediates the biosynthesis of chaetoglobosin A which has a unique inhibitory activity against actin polymerization in mammalian cells. Chaetoglobosin A and its intermediates are involved in the morphological differentiation of C.globosum. The first step of the pathway is the synthesis of prochaetoglobosin I via condensation of one acetyl-CoA, 8 malonyl-CoA, and a L-tryptophan molecule by the PKS-NRPS hybrid synthetase cheA, followed by reduction of backbone double bond to install desired geometry by the enoyl reductase cheB. Further multiple oxidation steps performed by the cytochrome P450 monooxygenases cheE and cheG, as well as by the FAD-linked oxidoreductase cheF, lead to the formation of chaetoglobosin A. Depending on the order of action of these reductases, distinct intermediates can be identified. Within the pathway, the cytochrome P450 monooxygenase cheE catalyzes a stereospecific epoxidation on prochaetoglobosin I, cytoglobosin D, and chaetoglobosin J intermediates. The FAD-linked oxidoreductase cheF performs dehydrogenation of the C-20 hydroxyl groups in the 20-dihyrochaetoglobosin A and cytoglobosin D intermediates. Finally, the cytochrome P450 monooxygenase cheG can catalyze the stereospecific dihydroxylation of prochaetoglobosin I and prochaetoglobosin IV at C-19 and C-20, respectively. The Diels-Alderase cheD may play a role in the post-PKS-NRPS biosynthetic steps catalyzing Diels-Alder cyclization. This chain is PKS-NRPS hybrid synthetase cheA, found in Chaetomium globosum (strain ATCC 6205 / CBS 148.51 / DSM 1962 / NBRC 6347 / NRRL 1970) (Soil fungus).